We begin with the raw amino-acid sequence, 256 residues long: 5'-nucleotidase SurE (256 aa).

Positions 9, 10, 42, and 95 each coordinate a divalent metal cation.

Belongs to the SurE nucleotidase family. A divalent metal cation serves as cofactor.

The protein resides in the cytoplasm. The catalysed reaction is a ribonucleoside 5'-phosphate + H2O = a ribonucleoside + phosphate. Its function is as follows. Nucleotidase that shows phosphatase activity on nucleoside 5'-monophosphates. In Campylobacter curvus (strain 525.92), this protein is 5'-nucleotidase SurE.